The chain runs to 318 residues: BES1/BZR1 homolog protein 2 (318 aa).

The segment covering 1 to 13 (MAAGGGGGGGGSS) has biased composition (gly residues). 4 disordered regions span residues 1 to 34 (MAAG…RRRR), 84 to 133 (FKPP…PSPS), 166 to 195 (NSAP…PNGG), and 209 to 231 (APSS…CDES). Residues 16 to 97 (RTPTWKEREN…ASDISGTPTN (82 aa)) are required for DNA-binding. Over residues 91–101 (ISGTPTNFSTN) the composition is skewed to polar residues. The span at 102 to 133 (SSIQPSPQSSAFPSPAPSYHGSPVSSSFPSPS) shows a compositional bias: low complexity.

The protein belongs to the BZR/LAT61 family. In terms of processing, phosphorylated. Phosphorylation increases protein degradation.

The chain is BES1/BZR1 homolog protein 2 (BEH2) from Arabidopsis thaliana (Mouse-ear cress).